We begin with the raw amino-acid sequence, 536 residues long: Xylulose kinase (536 aa).

Residues H99, R170, D280, and N281 each contribute to the substrate site. ATP-binding positions include W355, 441 to 442, and N445; that span reads GA.

Belongs to the FGGY kinase family. As to quaternary structure, monomer.

It carries out the reaction D-xylulose + ATP = D-xylulose 5-phosphate + ADP + H(+). Phosphorylates D-xylulose to produce D-xylulose 5-phosphate, a molecule that may play an important role in the regulation of glucose metabolism and lipogenesis. The sequence is that of Xylulose kinase (XYLB) from Homo sapiens (Human).